The sequence spans 1177 residues: uncharacterized protein (1177 aa).

The N-terminal stretch at 1–26 (MKKLLKKSKFWWFLLCGLSVSTILVA) is a signal peptide. C27 carries the N-palmitoyl cysteine lipid modification. A lipid anchor (S-diacylglycerol cysteine) is attached at C27.

Belongs to the MG307/MG309/MG338 family.

It is found in the cell membrane. This is an uncharacterized protein from Mycoplasma genitalium (strain ATCC 33530 / DSM 19775 / NCTC 10195 / G37) (Mycoplasmoides genitalium).